A 148-amino-acid polypeptide reads, in one-letter code: Protein F15 (148 aa).

Belongs to the poxviridae F15 protein family.

The sequence is that of Protein F15 from Fowlpox virus (strain NVSL) (FPV).